An 86-amino-acid polypeptide reads, in one-letter code: MIDGQSLVLAASAIGAGLAMIAGIGAGIGQGFAAGKGAESVGRQPDAQGDIIRTMLLGAAVAETTGIYALVIALLLLFANPLIGML.

2 consecutive transmembrane segments (helical) span residues 8 to 28 (VLAA…GAGI) and 66 to 86 (GIYA…IGML).

The protein belongs to the ATPase C chain family. In terms of assembly, F-type ATPases have 2 components, F(1) - the catalytic core - and F(0) - the membrane proton channel. F(1) has five subunits: alpha(3), beta(3), gamma(1), delta(1), epsilon(1). F(0) has three main subunits: a(1), b(2) and c(10-14). The alpha and beta chains form an alternating ring which encloses part of the gamma chain. F(1) is attached to F(0) by a central stalk formed by the gamma and epsilon chains, while a peripheral stalk is formed by the delta and b chains.

The protein resides in the cell membrane. Its function is as follows. F(1)F(0) ATP synthase produces ATP from ADP in the presence of a proton or sodium gradient. F-type ATPases consist of two structural domains, F(1) containing the extramembraneous catalytic core and F(0) containing the membrane proton channel, linked together by a central stalk and a peripheral stalk. During catalysis, ATP synthesis in the catalytic domain of F(1) is coupled via a rotary mechanism of the central stalk subunits to proton translocation. Key component of the F(0) channel; it plays a direct role in translocation across the membrane. A homomeric c-ring of between 10-14 subunits forms the central stalk rotor element with the F(1) delta and epsilon subunits. This is ATP synthase subunit c from Natranaerobius thermophilus (strain ATCC BAA-1301 / DSM 18059 / JW/NM-WN-LF).